Reading from the N-terminus, the 185-residue chain is Pap fimbrial major pilin protein (185 aa).

An N-terminal signal peptide occupies residues 1–22 (MIKSVIAGAVAMAVVSFGVNNA). A disulfide bridge connects residues C44 and C83.

This sequence belongs to the fimbrial protein family.

Its subcellular location is the secreted. The protein resides in the fimbrium. Polymerizes to form the thick (6.8 nm in diameter) rod of the pilus (also called fimbria). The rod is a right-handed helical cylinder with 3.28 PapA subunits per turn. Pili are polar filaments radiating from the surface of the bacterium to a length of 0.5-1.5 micrometers and numbering 100-300 per cell, and enable bacteria to colonize the epithelium of specific host organs. The chain is Pap fimbrial major pilin protein (papA) from Escherichia coli.